A 404-amino-acid chain; its full sequence is Propionate kinase (404 aa).

It belongs to the acetokinase family. PduW subfamily.

It localises to the cytoplasm. The catalysed reaction is propanoate + ATP = propanoyl phosphate + ADP. It functions in the pathway polyol metabolism; 1,2-propanediol degradation. In terms of biological role, works with phosphate acetyltransferase (pta) to capture exogenous propionate and regenerate propionyl-CoA during degradation of 1,2-propanediol (1,2-PD). In Citrobacter koseri (strain ATCC BAA-895 / CDC 4225-83 / SGSC4696), this protein is Propionate kinase.